Reading from the N-terminus, the 129-residue chain is Protein PerB (129 aa).

Functionally, positive regulatory protein of bfpA, the gene coding for the bundle-forming pilus of EPEC. In Escherichia coli O111:H-, this protein is Protein PerB (perB).